The sequence spans 55 residues: Large ribosomal subunit protein bL33 (55 aa).

Belongs to the bacterial ribosomal protein bL33 family.

This is Large ribosomal subunit protein bL33 from Bartonella henselae (strain ATCC 49882 / DSM 28221 / CCUG 30454 / Houston 1) (Rochalimaea henselae).